Reading from the N-terminus, the 310-residue chain is Porphobilinogen deaminase (310 aa).

Cys242 bears the S-(dipyrrolylmethanemethyl)cysteine mark.

Belongs to the HMBS family. Monomer. Dipyrromethane is required as a cofactor.

It carries out the reaction 4 porphobilinogen + H2O = hydroxymethylbilane + 4 NH4(+). It functions in the pathway porphyrin-containing compound metabolism; protoporphyrin-IX biosynthesis; coproporphyrinogen-III from 5-aminolevulinate: step 2/4. In terms of biological role, tetrapolymerization of the monopyrrole PBG into the hydroxymethylbilane pre-uroporphyrinogen in several discrete steps. This chain is Porphobilinogen deaminase, found in Halorhodospira halophila (strain DSM 244 / SL1) (Ectothiorhodospira halophila (strain DSM 244 / SL1)).